Reading from the N-terminus, the 189-residue chain is Threonylcarbamoyl-AMP synthase (189 aa).

Residues 9-189 enclose the YrdC-like domain; it reads ASAQRKLSVY…IDGETGKRLR (181 aa).

This sequence belongs to the SUA5 family. TsaC subfamily.

It is found in the cytoplasm. It catalyses the reaction L-threonine + hydrogencarbonate + ATP = L-threonylcarbamoyladenylate + diphosphate + H2O. Its function is as follows. Required for the formation of a threonylcarbamoyl group on adenosine at position 37 (t(6)A37) in tRNAs that read codons beginning with adenine. Catalyzes the conversion of L-threonine, HCO(3)(-)/CO(2) and ATP to give threonylcarbamoyl-AMP (TC-AMP) as the acyladenylate intermediate, with the release of diphosphate. The polypeptide is Threonylcarbamoyl-AMP synthase (Neisseria gonorrhoeae (strain ATCC 700825 / FA 1090)).